A 130-amino-acid polypeptide reads, in one-letter code: Small ribosomal subunit protein uS9 (130 aa).

This sequence belongs to the universal ribosomal protein uS9 family.

The chain is Small ribosomal subunit protein uS9 from Salmonella paratyphi A (strain AKU_12601).